Here is a 470-residue protein sequence, read N- to C-terminus: tRNA-2-methylthio-N(6)-dimethylallyladenosine synthase (470 aa).

The MTTase N-terminal domain maps to 1 to 116; sequence MTYTVRTYGC…LPALLRRSRH (116 aa). Residues Cys-10, Cys-45, Cys-79, Cys-153, Cys-157, and Cys-160 each coordinate [4Fe-4S] cluster. One can recognise a Radical SAM core domain in the interval 139–369; sequence RESNYSAWVS…LDLQNRIALE (231 aa). The region spanning 372–439 is the TRAM domain; it reads RKLIGKEVEL…PYHLIGDNAL (68 aa).

The protein belongs to the methylthiotransferase family. MiaB subfamily. In terms of assembly, monomer. Requires [4Fe-4S] cluster as cofactor.

It is found in the cytoplasm. The enzyme catalyses N(6)-dimethylallyladenosine(37) in tRNA + (sulfur carrier)-SH + AH2 + 2 S-adenosyl-L-methionine = 2-methylsulfanyl-N(6)-dimethylallyladenosine(37) in tRNA + (sulfur carrier)-H + 5'-deoxyadenosine + L-methionine + A + S-adenosyl-L-homocysteine + 2 H(+). Catalyzes the methylthiolation of N6-(dimethylallyl)adenosine (i(6)A), leading to the formation of 2-methylthio-N6-(dimethylallyl)adenosine (ms(2)i(6)A) at position 37 in tRNAs that read codons beginning with uridine. This Tropheryma whipplei (strain Twist) (Whipple's bacillus) protein is tRNA-2-methylthio-N(6)-dimethylallyladenosine synthase.